Reading from the N-terminus, the 621-residue chain is Putative acyltransferase plsB1 (621 aa).

The HXXXXD motif motif lies at 123–128 (HRSYLD).

This sequence belongs to the GPAT/DAPAT family.

It localises to the cell membrane. This is Putative acyltransferase plsB1 (plsB1) from Mycobacterium bovis (strain ATCC BAA-935 / AF2122/97).